A 239-amino-acid chain; its full sequence is Carboxy-S-adenosyl-L-methionine synthase (239 aa).

Residues Tyr35, 64–66 (GCS), 88–89 (DN), and Arg195 each bind S-adenosyl-L-methionine.

The protein belongs to the class I-like SAM-binding methyltransferase superfamily. Cx-SAM synthase family. Homodimer.

It carries out the reaction prephenate + S-adenosyl-L-methionine = carboxy-S-adenosyl-L-methionine + 3-phenylpyruvate + H2O. Functionally, catalyzes the conversion of S-adenosyl-L-methionine (SAM) to carboxy-S-adenosyl-L-methionine (Cx-SAM). The chain is Carboxy-S-adenosyl-L-methionine synthase from Helicobacter pylori (strain HPAG1).